Reading from the N-terminus, the 86-residue chain is Small ribosomal subunit protein uS17 (86 aa).

The protein belongs to the universal ribosomal protein uS17 family. As to quaternary structure, part of the 30S ribosomal subunit.

Its function is as follows. One of the primary rRNA binding proteins, it binds specifically to the 5'-end of 16S ribosomal RNA. The sequence is that of Small ribosomal subunit protein uS17 from Streptococcus pyogenes serotype M6 (strain ATCC BAA-946 / MGAS10394).